A 168-amino-acid polypeptide reads, in one-letter code: Protein OPG162 (168 aa).

Residues 1–14 (MKSLNRQTVSRFKK) are Intravirion-facing. The chain crosses the membrane as a helical span at residues 15–37 (LSVPAAIMMILSTIISGIGTFLH). The Virion surface portion of the chain corresponds to 38–168 (YKEELMPSAC…SVLCVKRFYK (131 aa)). The C-type lectin domain maps to 54–163 (YDKHCYLDTN…CKSTQSVLCV (110 aa)). Cystine bridges form between Cys-75/Cys-162 and Cys-141/Cys-154. N-linked (GlcNAc...) asparagine; by host glycosylation is present at Asn-133.

The protein belongs to the orthopoxvirus OPG162 protein family. In terms of assembly, interacts with protein OPG161. Interacts with protein OPG164. Interacts with protein OPG190.

The protein resides in the virion membrane. The protein localises to the host Golgi apparatus. Forms a complex with OPG162 and OPG190 to coordinate the incorporation of OPG164 into wrapped enveloped virion (EV) membranes and, subsequently, the production of actin tails. Therefore plays an essential role in efficient cell-to-cell spread of viral particles. The sequence is that of Protein OPG162 (OPG162) from Variola virus (isolate Human/India/Ind3/1967) (VARV).